Reading from the N-terminus, the 236-residue chain is 2-C-methyl-D-erythritol 4-phosphate cytidylyltransferase (236 aa).

This sequence belongs to the IspD/TarI cytidylyltransferase family. IspD subfamily. In terms of assembly, homodimer.

The enzyme catalyses 2-C-methyl-D-erythritol 4-phosphate + CTP + H(+) = 4-CDP-2-C-methyl-D-erythritol + diphosphate. It functions in the pathway isoprenoid biosynthesis; isopentenyl diphosphate biosynthesis via DXP pathway; isopentenyl diphosphate from 1-deoxy-D-xylulose 5-phosphate: step 2/6. Functionally, catalyzes the formation of 4-diphosphocytidyl-2-C-methyl-D-erythritol from CTP and 2-C-methyl-D-erythritol 4-phosphate (MEP). The protein is 2-C-methyl-D-erythritol 4-phosphate cytidylyltransferase of Salmonella arizonae (strain ATCC BAA-731 / CDC346-86 / RSK2980).